The primary structure comprises 391 residues: 3-ketoacyl-CoA thiolase (391 aa).

Residue C95 is the Acyl-thioester intermediate of the active site. Residues H347 and C377 each act as proton acceptor in the active site.

Belongs to the thiolase-like superfamily. Thiolase family. Heterotetramer of two alpha chains (FadB) and two beta chains (FadA).

Its subcellular location is the cytoplasm. The catalysed reaction is an acyl-CoA + acetyl-CoA = a 3-oxoacyl-CoA + CoA. It functions in the pathway lipid metabolism; fatty acid beta-oxidation. Functionally, catalyzes the final step of fatty acid oxidation in which acetyl-CoA is released and the CoA ester of a fatty acid two carbons shorter is formed. In Pseudomonas aeruginosa (strain ATCC 15692 / DSM 22644 / CIP 104116 / JCM 14847 / LMG 12228 / 1C / PRS 101 / PAO1), this protein is 3-ketoacyl-CoA thiolase.